We begin with the raw amino-acid sequence, 226 residues long: Eukaryotic translation initiation factor 3 subunit K (226 aa).

In terms of domain architecture, PCI spans 44–202; it reads YSLEVNLCLL…IVLPQNEFNH (159 aa).

This sequence belongs to the eIF-3 subunit K family. As to quaternary structure, component of the eukaryotic translation initiation factor 3 (eIF-3) complex.

The protein localises to the cytoplasm. Functionally, component of the eukaryotic translation initiation factor 3 (eIF-3) complex, which is involved in protein synthesis of a specialized repertoire of mRNAs and, together with other initiation factors, stimulates binding of mRNA and methionyl-tRNAi to the 40S ribosome. The eIF-3 complex specifically targets and initiates translation of a subset of mRNAs involved in cell proliferation. The sequence is that of Eukaryotic translation initiation factor 3 subunit K (TIF3K1) from Arabidopsis thaliana (Mouse-ear cress).